Here is a 373-residue protein sequence, read N- to C-terminus: Flagellar P-ring protein (373 aa).

A signal peptide spans 1-27 (MPSFSPTLLKLAAAALSALLLSGVAAS).

It belongs to the FlgI family. As to quaternary structure, the basal body constitutes a major portion of the flagellar organelle and consists of four rings (L,P,S, and M) mounted on a central rod.

The protein resides in the periplasm. It is found in the bacterial flagellum basal body. Functionally, assembles around the rod to form the L-ring and probably protects the motor/basal body from shearing forces during rotation. The chain is Flagellar P-ring protein from Rhodopseudomonas palustris (strain BisB5).